A 319-amino-acid polypeptide reads, in one-letter code: Transmembrane and ubiquitin-like domain-containing protein 2 (319 aa).

The chain crosses the membrane as a helical span at residues 36–56 (VMVVAGVVALTLALVLAWLST). 2 disordered regions span residues 88 to 128 (VNQG…ARGE) and 145 to 165 (RQAGLGSSRPEAPLGLDDGSC). Over residues 95-111 (PTEHPHPSGGNDDKAEE) the composition is skewed to basic and acidic residues. One can recognise a Ubiquitin-like domain in the interval 173–246 (INVRLKFLND…IHCHRSPPGA (74 aa)). Helical transmembrane passes span 264 to 284 (LGVNVGSLMVPVFVVLLGVVW) and 298 to 318 (ATISLVGVTVFFSILVFGMYG).

The protein localises to the membrane. In Mus musculus (Mouse), this protein is Transmembrane and ubiquitin-like domain-containing protein 2 (Tmub2).